The sequence spans 722 residues: Glycine--tRNA ligase beta subunit (722 aa).

Belongs to the class-II aminoacyl-tRNA synthetase family. In terms of assembly, tetramer of two alpha and two beta subunits.

It localises to the cytoplasm. The catalysed reaction is tRNA(Gly) + glycine + ATP = glycyl-tRNA(Gly) + AMP + diphosphate. The sequence is that of Glycine--tRNA ligase beta subunit from Xylella fastidiosa (strain Temecula1 / ATCC 700964).